A 329-amino-acid chain; its full sequence is GTP 3',8-cyclase (329 aa).

In terms of domain architecture, Radical SAM core spans Met1–Ala229. Position 8 (Arg8) interacts with GTP. [4Fe-4S] cluster contacts are provided by Cys15 and Cys19. An S-adenosyl-L-methionine-binding site is contributed by Tyr21. Cys22 is a [4Fe-4S] cluster binding site. GTP is bound at residue Arg60. Residue Gly64 coordinates S-adenosyl-L-methionine. Residue Thr91 coordinates GTP. Position 115 (Ser115) interacts with S-adenosyl-L-methionine. Residue Lys155 coordinates GTP. Met189 provides a ligand contact to S-adenosyl-L-methionine. Residues Cys252 and Cys255 each contribute to the [4Fe-4S] cluster site. Arg257 to Arg259 contacts GTP. Cys269 lines the [4Fe-4S] cluster pocket.

Belongs to the radical SAM superfamily. MoaA family. In terms of assembly, monomer and homodimer. [4Fe-4S] cluster serves as cofactor.

It catalyses the reaction GTP + AH2 + S-adenosyl-L-methionine = (8S)-3',8-cyclo-7,8-dihydroguanosine 5'-triphosphate + 5'-deoxyadenosine + L-methionine + A + H(+). It participates in cofactor biosynthesis; molybdopterin biosynthesis. Functionally, catalyzes the cyclization of GTP to (8S)-3',8-cyclo-7,8-dihydroguanosine 5'-triphosphate. The sequence is that of GTP 3',8-cyclase from Rippkaea orientalis (strain PCC 8801 / RF-1) (Cyanothece sp. (strain PCC 8801)).